The sequence spans 938 residues: Histone deacetylase 7 (938 aa).

A disordered region spans residues methionine 1–alanine 40. The interval methionine 1–glutamine 121 is interaction with MEF2C. Transcription repression stretches follow at residues histidine 2–arginine 254 and glycine 241–glycine 533. The interaction with MEF2A stretch occupies residues serine 72–proline 172. Serine 132 bears the Phosphoserine mark. 4 disordered regions span residues serine 155–leucine 280, serine 331–glutamine 361, leucine 373–leucine 463, and arginine 472–glutamate 491. Residue serine 178 is modified to Phosphoserine; by MARK2, MARK3 and PKD/PRKD1. Positions lysine 190–serine 204 are enriched in basic and acidic residues. A Phosphoserine; by PKD/PRKD2 modification is found at serine 204. Residues serine 220–proline 235 are compositionally biased toward low complexity. At serine 344 the chain carries Phosphoserine; by PKD/PRKD1. Phosphoserine is present on residues serine 350 and serine 398. Over residues serine 350 to glutamine 361 the composition is skewed to low complexity. 2 stretches are compositionally biased toward low complexity: residues glycine 429–histidine 448 and serine 479–glutamate 491. Serine 479 carries the post-translational modification Phosphoserine; by PKD/PRKD1. Serine 480 carries the post-translational modification Phosphoserine. The segment at proline 505–aspartate 852 is histone deacetylase. Zn(2+) is bound by residues cysteine 520, cysteine 522, and histidine 528. Serine 582 carries the phosphoserine modification. Cysteine 605 contacts Zn(2+). Residue histidine 657 is part of the active site. The interval asparagine 864 to leucine 938 is interaction with SIN3A. A Nuclear export signal motif is present at residues alanine 904 to leucine 938.

It belongs to the histone deacetylase family. HD type 2 subfamily. As to quaternary structure, interacts with HDAC1, HDAC2, HDAC3, HDAC4, HDAC5, NCOR1, NCOR2, SIN3A, SIN3B, RBBP4, RBBP7, MTA1L1, SAP30 and MBD3. Interacts with KAT5 and EDNRA. Interacts with the 14-3-3 protein YWHAE, MEF2A, MEF2B and MEF2C. Interacts with ZMYND15. Interacts with KDM5B. Interacts with PML. Interacts with FOXP3. Interacts with RARA. Post-translationally, may be phosphorylated by CaMK1. Phosphorylated by the PKC kinases PKN1 and PKN2, impairing nuclear import. Phosphorylation at Ser-178 by MARK2, MARK3 and PRKD1 promotes interaction with 14-3-3 proteins and export from the nucleus. Phosphorylation at Ser-178 is a prerequisite for phosphorylation at Ser-204. In terms of tissue distribution, highly expressed in heart and lung. Expressed at intermediate level in muscle.

It localises to the nucleus. The protein localises to the cytoplasm. It catalyses the reaction N(6)-acetyl-L-lysyl-[histone] + H2O = L-lysyl-[histone] + acetate. It carries out the reaction N(6)-acetyl-L-lysyl-[protein] + H2O = L-lysyl-[protein] + acetate. With respect to regulation, its activity is inhibited by Trichostatin A (TSA), a known histone deacetylase inhibitor. Functionally, responsible for the deacetylation of lysine residues on the N-terminal part of the core histones (H2A, H2B, H3 and H4). Histone deacetylation gives a tag for epigenetic repression and plays an important role in transcriptional regulation, cell cycle progression and developmental events. Histone deacetylases act via the formation of large multiprotein complexes. Involved in muscle maturation by repressing transcription of myocyte enhancer factors such as MEF2A, MEF2B and MEF2C. During muscle differentiation, it shuttles into the cytoplasm, allowing the expression of myocyte enhancer factors. Positively regulates the transcriptional repressor activity of FOXP3. Serves as a corepressor of RARA, causing its deacetylation and inhibition of RARE DNA element binding. In association with RARA, plays a role in the repression of microRNA-10a and thereby in the inflammatory response. Also acetylates non-histone proteins, such as ALKBH5. This chain is Histone deacetylase 7 (Hdac7), found in Mus musculus (Mouse).